The chain runs to 625 residues: Pentatricopeptide repeat-containing protein At2g36980, mitochondrial (625 aa).

The N-terminal 7 residues, 1 to 7 (MSVLVRL), are a transit peptide targeting the mitochondrion. PPR repeat units lie at residues 3 to 33 (VLVRLTSKIASLAKSGRIASARQVFDGMPEL), 34 to 68 (DTVAWNTMLTSYSRLGLHQEAIALFTQLRFSDAKP), 69 to 103 (DDYSFTAILSTCASLGNVKFGRKIQSLVIRSGFCA), 104 to 134 (SLPVNNSLIDMYGKCSDTLSANKVFRDMCCD), 137 to 167 (NEVTWCSLLFAYMNAEQFEAALDVFVEMPKR), 168 to 202 (VAFAWNIMISGHAHCGKLESCLSLFKEMLESEFKP), 203 to 238 (DCYTFSSLMNACSADSSNVVYGRMVHAVMLKNGWSS), 239 to 269 (AVEAKNSVLSFYTKLGSRDDAMRELESIEVL), 270 to 300 (TQVSWNSIIDACMKIGETEKALEVFHLAPEK), 301 to 335 (NIVTWTTMITGYGRNGDGEQALRFFVEMMKSGVDS), 336 to 370 (DHFAYGAVLHACSGLALLGHGKMIHGCLIHCGFQG), 371 to 401 (YAYVGNALVNLYAKCGDIKEADRAFGDIANK), 402 to 436 (DLVSWNTMLFAFGVHGLADQALKLYDNMIASGIKP), 437 to 471 (DNVTFIGLLTTCSHSGLVEEGCMIFESMVKDYRIP), and 473 to 503 (EVDHVTCMIDMFGRGGHLAEAKDLATTYSSL). The tract at residues 512–587 (SWETLLGACS…TPGCSWIEVG (76 aa)) is type E motif. The type E(+) motif stretch occupies residues 588–618 (NQVSTFVVGDSSHPRLEELSETLNCLQHEMR).

It belongs to the PPR family. PCMP-E subfamily.

It localises to the mitochondrion. The protein is Pentatricopeptide repeat-containing protein At2g36980, mitochondrial (PCMP-E73) of Arabidopsis thaliana (Mouse-ear cress).